Here is a 402-residue protein sequence, read N- to C-terminus: Putative cytochrome P450 123 (402 aa).

Cys-350 serves as a coordination point for heme.

This sequence belongs to the cytochrome P450 family. Requires heme as cofactor.

The sequence is that of Putative cytochrome P450 123 (cyp123) from Mycobacterium bovis (strain ATCC BAA-935 / AF2122/97).